The sequence spans 265 residues: 3-methyl-2-oxobutanoate hydroxymethyltransferase (265 aa).

2 residues coordinate Mg(2+): Asp45 and Asp84. 3-methyl-2-oxobutanoate contacts are provided by residues 45-46, Asp84, and Lys112; that span reads DS. Glu114 serves as a coordination point for Mg(2+). Glu181 acts as the Proton acceptor in catalysis.

It belongs to the PanB family. As to quaternary structure, homodecamer; pentamer of dimers. Mg(2+) serves as cofactor.

It localises to the cytoplasm. The enzyme catalyses 3-methyl-2-oxobutanoate + (6R)-5,10-methylene-5,6,7,8-tetrahydrofolate + H2O = 2-dehydropantoate + (6S)-5,6,7,8-tetrahydrofolate. It functions in the pathway cofactor biosynthesis; (R)-pantothenate biosynthesis; (R)-pantoate from 3-methyl-2-oxobutanoate: step 1/2. Functionally, catalyzes the reversible reaction in which hydroxymethyl group from 5,10-methylenetetrahydrofolate is transferred onto alpha-ketoisovalerate to form ketopantoate. This chain is 3-methyl-2-oxobutanoate hydroxymethyltransferase, found in Wigglesworthia glossinidia brevipalpis.